Consider the following 445-residue polypeptide: 6-phosphogluconate dehydrogenase, decarboxylating (445 aa).

Residues 1-4 (AVMG), 22-24 (NRS), 63-65 (VKA), and N91 contribute to the NADP(+) site. Substrate is bound by residues N91 and 117 to 119 (SGG). K172 (proton acceptor) is an active-site residue. Substrate is bound at residue 175-176 (HN). The active-site Proton donor is the E179. 5 residues coordinate substrate: Y180, K249, R276, R434, and H440.

Belongs to the 6-phosphogluconate dehydrogenase family. In terms of assembly, homodimer.

It carries out the reaction 6-phospho-D-gluconate + NADP(+) = D-ribulose 5-phosphate + CO2 + NADPH. Its pathway is carbohydrate degradation; pentose phosphate pathway; D-ribulose 5-phosphate from D-glucose 6-phosphate (oxidative stage): step 3/3. In terms of biological role, catalyzes the oxidative decarboxylation of 6-phosphogluconate to ribulose 5-phosphate and CO(2), with concomitant reduction of NADP to NADPH. The protein is 6-phosphogluconate dehydrogenase, decarboxylating (gnd) of Citrobacter freundii.